Here is a 550-residue protein sequence, read N- to C-terminus: Formate--tetrahydrofolate ligase (550 aa).

Position 60–67 (60–67 (TPFGEGKT)) interacts with ATP.

It belongs to the formate--tetrahydrofolate ligase family.

It catalyses the reaction (6S)-5,6,7,8-tetrahydrofolate + formate + ATP = (6R)-10-formyltetrahydrofolate + ADP + phosphate. The protein operates within one-carbon metabolism; tetrahydrofolate interconversion. The polypeptide is Formate--tetrahydrofolate ligase (Campylobacter curvus (strain 525.92)).